We begin with the raw amino-acid sequence, 272 residues long: Tryptophan synthase alpha chain (272 aa).

Active-site proton acceptor residues include E53 and D64.

This sequence belongs to the TrpA family. Tetramer of two alpha and two beta chains.

It catalyses the reaction (1S,2R)-1-C-(indol-3-yl)glycerol 3-phosphate + L-serine = D-glyceraldehyde 3-phosphate + L-tryptophan + H2O. The protein operates within amino-acid biosynthesis; L-tryptophan biosynthesis; L-tryptophan from chorismate: step 5/5. Functionally, the alpha subunit is responsible for the aldol cleavage of indoleglycerol phosphate to indole and glyceraldehyde 3-phosphate. The polypeptide is Tryptophan synthase alpha chain (Xanthomonas campestris pv. campestris (strain B100)).